The chain runs to 52 residues: MASKNREIIKLKSSESSDMYWTVKNKRKTTGRLELKKYDRKLRRHVIFKEAR.

The protein belongs to the bacterial ribosomal protein bL33 family.

The sequence is that of Large ribosomal subunit protein bL33 (rpmG) from Chlamydia pneumoniae (Chlamydophila pneumoniae).